Consider the following 619-residue polypeptide: Calnexin (619 aa).

A signal peptide spans M1–S21. D109 contributes to the Ca(2+) binding site. The cysteines at positions 152 and 186 are disulfide-linked. Positions 156, 158, 177, and 184 each coordinate an alpha-D-glucoside. N-linked (GlcNAc...) asparagine glycosylation occurs at N203. The p domain (Extended arm) stretch occupies residues I268–E401. 5 consecutive repeat copies span residues D270–R282, D287–N299, D306–E318, D325–D337, and G340–P350. 2 4 X approximate repeats regions span residues D270–D337 and G340–P397. C352 and C358 are joined by a disulfide. 3 tandem repeats follow at residues G359 to P369, G373 to P383, and G387 to P397. Residue E417 participates in an alpha-D-glucoside binding. A Ca(2+)-binding site is contributed by D428. Residues L481–F501 traverse the membrane as a helical segment. The disordered stretch occupies residues G538 to D619. Residues P547–E557 are compositionally biased toward polar residues. A compositionally biased stretch (low complexity) spans E566 to A577. N-linked (GlcNAc...) asparagine glycosylation occurs at N571. Positions H585 to K601 are enriched in basic and acidic residues. Residues A610–D619 are compositionally biased toward basic residues.

Belongs to the calreticulin family. Post-translationally, glycosylation is important for its biological activity. In terms of tissue distribution, expressed ubiquitously in every blastomere of the embryo up to the gastrulation stage. Expression becomes gradually restricted to the head and tail regions at the comma stage during embryogenesis. During postembryonic development, expressed prominently in the H-shaped excretory cell, in the neurons of head (including ASK and ADL) and tail (including PHA and PHB), in the dorsal and ventral nerve cords, and in the spermatheca. Expressed in the spicules of the male tail (at protein level).

The protein localises to the endoplasmic reticulum membrane. It is found in the cytoplasm. Its subcellular location is the perinuclear region. The protein resides in the cytoplasmic vesicle. Calcium-binding protein that interacts with newly synthesized monoglucosylated glycoproteins in the endoplasmic reticulum. It may act in assisting protein assembly and/or in the retention within the ER of unassembled protein subunits. It seems to play a major role in the quality control apparatus of the ER by the retention of incorrectly folded proteins. Required for embryogenesis and larval development under heat and ER stress conditions. May be important for germ cell development. Involved in neuronal necrotic cell death. The sequence is that of Calnexin (cnx-1) from Caenorhabditis elegans.